A 357-amino-acid chain; its full sequence is Peptide chain release factor 1 (357 aa).

Gln-236 carries the post-translational modification N5-methylglutamine. The span at Glu-283 to Arg-309 shows a compositional bias: basic and acidic residues. The interval Glu-283–Phe-313 is disordered.

Belongs to the prokaryotic/mitochondrial release factor family. Post-translationally, methylated by PrmC. Methylation increases the termination efficiency of RF1.

It localises to the cytoplasm. Functionally, peptide chain release factor 1 directs the termination of translation in response to the peptide chain termination codons UAG and UAA. The sequence is that of Peptide chain release factor 1 from Rickettsia bellii (strain OSU 85-389).